The primary structure comprises 240 residues: Small ribosomal subunit protein uS2 (240 aa).

The protein belongs to the universal ribosomal protein uS2 family.

This is Small ribosomal subunit protein uS2 from Wigglesworthia glossinidia brevipalpis.